Reading from the N-terminus, the 323-residue chain is Digestive cysteine proteinase 2 (323 aa).

An N-terminal signal peptide occupies residues 1-16 (MKVAVLFLCGVALAAA). A propeptide spans 17 to 107 (SPSWEHFKGK…FYPKKETGPQ (91 aa)) (activation peptide). 3 disulfides stabilise this stretch: C128–C171, C162–C204, and C263–C312. The active site involves C131. Residues H270 and N290 contribute to the active site.

This sequence belongs to the peptidase C1 family.

Its activity is regulated as follows. Inhibited by E-64, antipain, leupeptin, heavy metal ions, iodoacetic acid, dithionitrobenzene, p-hydroxymercuri-benzoate; activated by mercaptoethanol and dithiothreitol. This is Digestive cysteine proteinase 2 (LCP2) from Homarus americanus (American lobster).